We begin with the raw amino-acid sequence, 583 residues long: Isocitrate dehydrogenase kinase/phosphatase (583 aa).

Residues 315–321 (APGIRGM) and K336 contribute to the ATP site. D371 is a catalytic residue.

It belongs to the AceK family.

The protein localises to the cytoplasm. It carries out the reaction L-seryl-[isocitrate dehydrogenase] + ATP = O-phospho-L-seryl-[isocitrate dehydrogenase] + ADP + H(+). Its function is as follows. Bifunctional enzyme which can phosphorylate or dephosphorylate isocitrate dehydrogenase (IDH) on a specific serine residue. This is a regulatory mechanism which enables bacteria to bypass the Krebs cycle via the glyoxylate shunt in response to the source of carbon. When bacteria are grown on glucose, IDH is fully active and unphosphorylated, but when grown on acetate or ethanol, the activity of IDH declines drastically concomitant with its phosphorylation. The sequence is that of Isocitrate dehydrogenase kinase/phosphatase from Salmonella dublin (strain CT_02021853).